The sequence spans 130 residues: MSATQYYGTGRRKTSTARVFAKVGSGNIVVNQRPLDEYFGRETARMVVRQPLELVEMTEKLDIYVTVKGGGITGQAGAIRHGITRALMELDEALRPSLRAAGFVTRDARKVERKKVGLRKARRKPQFSKR.

This sequence belongs to the universal ribosomal protein uS9 family.

The polypeptide is Small ribosomal subunit protein uS9 (Shewanella loihica (strain ATCC BAA-1088 / PV-4)).